Here is a 219-residue protein sequence, read N- to C-terminus: 2-hydroxy-3-keto-5-methylthiopentenyl-1-phosphate phosphatase (219 aa).

This sequence belongs to the HAD-like hydrolase superfamily. MtnX family.

The enzyme catalyses 2-hydroxy-5-methylsulfanyl-3-oxopent-1-enyl phosphate + H2O = 1,2-dihydroxy-5-(methylsulfanyl)pent-1-en-3-one + phosphate. Its pathway is amino-acid biosynthesis; L-methionine biosynthesis via salvage pathway; L-methionine from S-methyl-5-thio-alpha-D-ribose 1-phosphate: step 4/6. In terms of biological role, dephosphorylates 2-hydroxy-3-keto-5-methylthiopentenyl-1-phosphate (HK-MTPenyl-1-P) yielding 1,2-dihydroxy-3-keto-5-methylthiopentene (DHK-MTPene). The protein is 2-hydroxy-3-keto-5-methylthiopentenyl-1-phosphate phosphatase of Bacillus thuringiensis (strain Al Hakam).